Consider the following 212-residue polypeptide: Small ribosomal subunit protein uS19m (212 aa).

The N-terminal 29 residues, 1-29 (MAFCTKLGGHWKQGVNVPVSSMLGSLRYM), are a transit peptide targeting the mitochondrion. The RRM domain maps to 31 to 109 (TKLYIGGLSP…FNISVNVAKD (79 aa)).

Belongs to the universal ribosomal protein uS19 family. Component of the mitochondrial ribosome small subunit.

It is found in the mitochondrion. Its function is as follows. The RNA-binding domain found in RPS19 may functionally replace the missing mitochondrial RPS13. The polypeptide is Small ribosomal subunit protein uS19m (RPS19) (Arabidopsis thaliana (Mouse-ear cress)).